The primary structure comprises 305 residues: UDP-3-O-acyl-N-acetylglucosamine deacetylase (305 aa).

Zn(2+)-binding residues include H79, H238, and D242. H265 serves as the catalytic Proton donor.

Belongs to the LpxC family. The cofactor is Zn(2+).

It carries out the reaction a UDP-3-O-[(3R)-3-hydroxyacyl]-N-acetyl-alpha-D-glucosamine + H2O = a UDP-3-O-[(3R)-3-hydroxyacyl]-alpha-D-glucosamine + acetate. It participates in glycolipid biosynthesis; lipid IV(A) biosynthesis; lipid IV(A) from (3R)-3-hydroxytetradecanoyl-[acyl-carrier-protein] and UDP-N-acetyl-alpha-D-glucosamine: step 2/6. Catalyzes the hydrolysis of UDP-3-O-myristoyl-N-acetylglucosamine to form UDP-3-O-myristoylglucosamine and acetate, the committed step in lipid A biosynthesis. The polypeptide is UDP-3-O-acyl-N-acetylglucosamine deacetylase (Colwellia psychrerythraea (strain 34H / ATCC BAA-681) (Vibrio psychroerythus)).